The chain runs to 328 residues: Probable membrane-associated kinase regulator 4 (328 aa).

The disordered stretch occupies residues 213–253; it reads GQIKTERPKKQSNGSVSGSHRRSFSVSMRRQAAKSSNNKSS. Over residues 223 to 240 the composition is skewed to polar residues; it reads QSNGSVSGSHRRSFSVSM.

The protein localises to the cell membrane. This is Probable membrane-associated kinase regulator 4 (MAKR4) from Arabidopsis thaliana (Mouse-ear cress).